Consider the following 318-residue polypeptide: MSLSLIIKWGGQEYTITSLSEEDTVLDLKQSLKGLTGVLPERQKLLGLKMKGKPADDDVKLGALKLKPNTKIMMMGTREESLEDVLGPPPDNDDVINDFDIEEEVVEVENREENLLKISRRVKEYKVEILNPPREGKKLLVLDVDYTLFDHRSCAETGVELMRPYLHEFLTSAYEDYDIVIWSATNMKWIEAKMKELGVSTNANYKITFMLDSAAMITVHTPRRGLIDVKPLGVIWGKFSEYYSKKNTIMFDDIGRNFLMNPQNGLKIRPFMKAHLNRDKDKELLKLTQYLKEIAKLDDFLELNHKHWERYLSKKQGQ.

Residues 3-81 (LSLIIKWGGQ…IMMMGTREES (79 aa)) enclose the Ubiquitin-like domain. The region spanning 133–294 (PREGKKLLVL…LKLTQYLKEI (162 aa)) is the FCP1 homology domain. Positions 143, 145, and 253 each coordinate Mg(2+).

Mg(2+) is required as a cofactor.

The protein resides in the nucleus. The catalysed reaction is O-phospho-L-seryl-[protein] + H2O = L-seryl-[protein] + phosphate. The enzyme catalyses O-phospho-L-threonyl-[protein] + H2O = L-threonyl-[protein] + phosphate. Functionally, dephosphorylates 26S nuclear proteasomes, thereby decreasing their proteolytic activity. Recruited to the 19S regulatory particle of the 26S proteasome where it dephosphorylates 19S component PSMC2 which impairs PSMC2 ATPase activity and disrupts 26S proteasome assembly. Has also been reported to stimulate the proteolytic activity of the 26S proteasome. The polypeptide is Ubiquitin-like domain-containing CTD phosphatase 1 (UBLCP1) (Gallus gallus (Chicken)).